A 436-amino-acid chain; its full sequence is UPF0597 protein YhaM (436 aa).

It belongs to the UPF0597 family.

This chain is UPF0597 protein YhaM, found in Escherichia coli (strain K12 / MC4100 / BW2952).